The chain runs to 122 residues: Large ribosomal subunit protein uL14 (122 aa).

Belongs to the universal ribosomal protein uL14 family. In terms of assembly, part of the 50S ribosomal subunit. Forms a cluster with proteins L3 and L19. In the 70S ribosome, L14 and L19 interact and together make contacts with the 16S rRNA in bridges B5 and B8.

Binds to 23S rRNA. Forms part of two intersubunit bridges in the 70S ribosome. The protein is Large ribosomal subunit protein uL14 of Corynebacterium diphtheriae (strain ATCC 700971 / NCTC 13129 / Biotype gravis).